Reading from the N-terminus, the 128-residue chain is Saitohin (128 aa).

A compositionally biased stretch (polar residues) spans 77–87 (SYSSEENSRNG). A disordered region spans residues 77 to 128 (SYSSEENSRNGAEQGRQLSIEGPFQGQNCPSHPAAALPLPMRGESQATSCQV).

As to quaternary structure, interacts with PRDX6.

The protein localises to the cytoplasm. Its subcellular location is the nucleus. The chain is Saitohin (STH) from Pan troglodytes (Chimpanzee).